The primary structure comprises 62 residues: Large ribosomal subunit protein bL28 (62 aa).

It belongs to the bacterial ribosomal protein bL28 family.

The protein is Large ribosomal subunit protein bL28 of Onion yellows phytoplasma (strain OY-M).